Consider the following 448-residue polypeptide: Zinc finger CCCH domain-containing protein 43 (448 aa).

The disordered stretch occupies residues 1-106; that stretch reads MVNSEEIADG…GWSENESENV (106 aa). The segment covering 24–45 has biased composition (basic and acidic residues); that stretch reads SSHDRSLSDLNHAAEDLSDKLK. Residues 63 to 79 are compositionally biased toward polar residues; that stretch reads VSESNGGLDSNAVVTIN. Residues 80–89 are compositionally biased toward acidic residues; it reads QEEEEEEEDR. 5 C3H1-type zinc fingers span residues 110-138, 158-186, 204-232, 346-374, and 392-420; these read RPGA…HPLA, KLGL…HTIP, RPGE…HPDP, RPDQ…HPKN, and RPDQ…HSVQ. The segment at 424 to 448 is disordered; that stretch reads STESSQAIVEPPQVSANGNESDGWN. Residues 437 to 448 are compositionally biased toward polar residues; it reads VSANGNESDGWN.

It is found in the nucleus. This is Zinc finger CCCH domain-containing protein 43 from Arabidopsis thaliana (Mouse-ear cress).